Here is a 491-residue protein sequence, read N- to C-terminus: Chromosomal replication initiator protein DnaA (491 aa).

The tract at residues 1 to 86 (MTDELNSQFT…VEALSRRLGE (86 aa)) is domain I, interacts with DnaA modulators. Residues 86-150 (ENVELGVRIA…GADKAETPDT (65 aa)) are domain II. The interval 151–367 (SLNARYTFES…GALIRVTAFA (217 aa)) is domain III, AAA+ region. 4 residues coordinate ATP: glycine 195, glycine 197, lysine 198, and threonine 199. A domain IV, binds dsDNA region spans residues 368-491 (SLNKSPIELS…TARIRQRSRH (124 aa)).

This sequence belongs to the DnaA family. In terms of assembly, oligomerizes as a right-handed, spiral filament on DNA at oriC.

It localises to the cytoplasm. Functionally, plays an essential role in the initiation and regulation of chromosomal replication. ATP-DnaA binds to the origin of replication (oriC) to initiate formation of the DNA replication initiation complex once per cell cycle. Binds the DnaA box (a 9 base pair repeat at the origin) and separates the double-stranded (ds)DNA. Forms a right-handed helical filament on oriC DNA; dsDNA binds to the exterior of the filament while single-stranded (ss)DNA is stabiized in the filament's interior. The ATP-DnaA-oriC complex binds and stabilizes one strand of the AT-rich DNA unwinding element (DUE), permitting loading of DNA polymerase. After initiation quickly degrades to an ADP-DnaA complex that is not apt for DNA replication. Binds acidic phospholipids. In Mycobacteroides abscessus (strain ATCC 19977 / DSM 44196 / CCUG 20993 / CIP 104536 / JCM 13569 / NCTC 13031 / TMC 1543 / L948) (Mycobacterium abscessus), this protein is Chromosomal replication initiator protein DnaA.